Here is a 62-residue protein sequence, read N- to C-terminus: Sperm protamine P1 (62 aa).

The disordered stretch occupies residues 1–62; it reads MARYRHSRSR…RYSRRRRRRY (62 aa).

This sequence belongs to the protamine P1 family. Testis.

It localises to the nucleus. The protein localises to the chromosome. In terms of biological role, protamines substitute for histones in the chromatin of sperm during the haploid phase of spermatogenesis. They compact sperm DNA into a highly condensed, stable and inactive complex. In Notamacropus eugenii (Tammar wallaby), this protein is Sperm protamine P1 (PRM1).